We begin with the raw amino-acid sequence, 107 residues long: Integration host factor subunit alpha (107 aa).

The protein belongs to the bacterial histone-like protein family. In terms of assembly, heterodimer of an alpha and a beta chain.

Functionally, this protein is one of the two subunits of integration host factor, a specific DNA-binding protein that functions in genetic recombination as well as in transcriptional and translational control. The protein is Integration host factor subunit alpha of Bartonella tribocorum (strain CIP 105476 / IBS 506).